The sequence spans 134 residues: Profilin-1 (134 aa).

Belongs to the profilin family. In terms of assembly, occurs in many kinds of cells as a complex with monomeric actin in a 1:1 ratio.

Its subcellular location is the cytoplasm. The protein resides in the cytoskeleton. Functionally, binds to actin and affects the structure of the cytoskeleton. At high concentrations, profilin prevents the polymerization of actin, whereas it enhances it at low concentrations. By binding to PIP2, it inhibits the formation of IP3 and DG. In Nicotiana tabacum (Common tobacco), this protein is Profilin-1 (PRO1).